The chain runs to 572 residues: Delta-1-pyrroline-5-carboxylate dehydrogenase, mitochondrial (572 aa).

300 to 305 is a binding site for NAD(+); sequence GQISTR. E320 (proton acceptor) is an active-site residue. Residue C354 is the Nucleophile of the active site.

It belongs to the aldehyde dehydrogenase family.

It localises to the mitochondrion matrix. It carries out the reaction L-glutamate 5-semialdehyde + NAD(+) + H2O = L-glutamate + NADH + 2 H(+). Its pathway is amino-acid degradation; L-proline degradation into L-glutamate; L-glutamate from L-proline: step 2/2. The chain is Delta-1-pyrroline-5-carboxylate dehydrogenase, mitochondrial (prnC) from Emericella nidulans (strain FGSC A4 / ATCC 38163 / CBS 112.46 / NRRL 194 / M139) (Aspergillus nidulans).